The sequence spans 529 residues: Autoinducer-2 kinase (529 aa).

This sequence belongs to the FGGY kinase family.

The protein localises to the cytoplasm. It catalyses the reaction (S)-4,5-dihydroxypentane-2,3-dione + ATP = (2S)-2-hydroxy-3,4-dioxopentyl phosphate + ADP + H(+). Functionally, catalyzes the phosphorylation of autoinducer-2 (AI-2) to phospho-AI-2, which subsequently inactivates the transcriptional regulator LsrR and leads to the transcription of the lsr operon. Phosphorylates the ring-open form of (S)-4,5-dihydroxypentane-2,3-dione (DPD), which is the precursor to all AI-2 signaling molecules, at the C5 position. The protein is Autoinducer-2 kinase of Yersinia enterocolitica serotype O:8 / biotype 1B (strain NCTC 13174 / 8081).